A 1435-amino-acid polypeptide reads, in one-letter code: Guanine nucleotide exchange factor LTE1 (1435 aa).

The 133-residue stretch at 25-157 (VSKPVNSADL…SCIINLKKNW (133 aa)) folds into the N-terminal Ras-GEF domain. The tract at residues 235 to 256 (KLQSSNSSKNQRSPSMLLFPDN) is disordered. Low complexity predominate over residues 237-249 (QSSNSSKNQRSPS). Ser-271 bears the Phosphoserine mark. A disordered region spans residues 338–365 (QSGTLQGTSTTSSLDNNSNSNSRSNTSS). Ser-559 bears the Phosphoserine mark. Over residues 582 to 606 (KDNSSSRTDENGPQRLLFHETDKTN) the composition is skewed to basic and acidic residues. Residues 582 to 689 (KDNSSSRTDE…VRNIVNNTDS (108 aa)) form a disordered region. Polar residues predominate over residues 621-632 (SQSQKSMTSSPL). Residues 654–667 (SITYSYDSELSSSS) show a composition bias toward low complexity. Residue Ser-689 is modified to Phosphoserine. A Phosphothreonine modification is found at Thr-691. The span at 723 to 744 (EKNYDNKENQESEYESTKKLDN) shows a compositional bias: basic and acidic residues. Residues 723 to 747 (EKNYDNKENQESEYESTKKLDNSLD) form a disordered region. Phosphoserine occurs at positions 808 and 810. The interval 851 to 871 (AQNSPLKQTQNPQREFPNGTS) is disordered. Ser-1028 and Ser-1109 each carry phosphoserine. The Ras-GEF domain maps to 1194-1434 (DSLSVAQQMT…LTQEEINELS (241 aa)).

This sequence belongs to the LTE1 family. In terms of assembly, interacts with CDC24, CDC42, KEL1, KEL2, RAS2 and TEM1. Post-translationally, phosphorylated by CDC28 in a cell cycle-dependent manner and in response to nocodazole. Dephosphorylion by CDC14 triggers LTE1 release from bud cortex during the exit of mitosis.

It is found in the cytoplasm. The protein localises to the bud. Functionally, GDP-GTP exchange factor for TEM1, a Ras-like protein, component of the mitotic exit network (MEN). Activation of TEM1 by LTE1 in the bud ultimately leads to activation of CDC15 followed by the release of CDC14 from the nucleolus, which then inactivates cyclin-dependent kinases (CDKs) activity by several mechanism. Required for TEM1 localization to the bud cortex during mitotic exit. Fine-tunes the timing of the mitotic exit and couples this event with cytokinesis. In terms of biological role, involved in proprotein-processing like proalpha factor-processing in the secretory pathway. This Saccharomyces cerevisiae (strain ATCC 204508 / S288c) (Baker's yeast) protein is Guanine nucleotide exchange factor LTE1 (LTE1).